We begin with the raw amino-acid sequence, 614 residues long: Probable ATP-dependent RNA helicase DDX5 (614 aa).

Over residues 1–15 (MSGYSSDRDRGRDRG) the composition is skewed to basic and acidic residues. The tract at residues 1–39 (MSGYSSDRDRGRDRGFGAPRFGGSRAGPLSGKKFGNPGE) is disordered. S24 is modified (phosphoserine). N6-acetyllysine; alternate is present on K32. K32 participates in a covalent cross-link: Glycyl lysine isopeptide (Lys-Gly) (interchain with G-Cter in SUMO2); alternate. An N6-acetyllysine mark is found at K33 and K40. A Glycyl lysine isopeptide (Lys-Gly) (interchain with G-Cter in SUMO2) cross-link involves residue K45. Residue K53 forms a Glycyl lysine isopeptide (Lys-Gly) (interchain with G-Cter in SUMO2); alternate linkage. Residue K53 forms a Glycyl lysine isopeptide (Lys-Gly) (interchain with G-Cter in SUMO); alternate linkage. K53 participates in a covalent cross-link: Glycyl lysine isopeptide (Lys-Gly) (interchain with G-Cter in SUMO1); alternate. Residues 94–122 (LNFYEANFPANVMDVIARQNFTEPTAIQA) carry the Q motif motif. Residues 114 to 116 (FTE), Q121, and 138 to 145 (AQTGSGKT) contribute to the ATP site. The region spanning 125 to 300 (WPVALSGLDM…EDFLKDYIHI (176 aa)) is the Helicase ATP-binding domain. K236 is subject to N6-acetyllysine. A DEAD box motif is present at residues 248–251 (DEAD). Y297 carries the post-translational modification Phosphotyrosine. In terms of domain architecture, Helicase C-terminal spans 328–475 (KLIRLMEEIM…AINPKLLQLV (148 aa)). Glycyl lysine isopeptide (Lys-Gly) (interchain with G-Cter in SUMO2) cross-links involve residues K340, K343, K388, K391, K411, K437, K451, and K470. The tract at residues 477–504 (DRGSGRSRGRGGMKDDRRDRYSAGKRGG) is disordered. Residues 477–614 (DRGSGRSRGR…GYPMPTGYSQ (138 aa)) form a transactivation domain region. At S480 the chain carries Phosphoserine. The span at 488 to 498 (GMKDDRRDRYS) shows a compositional bias: basic and acidic residues. S520 is subject to Phosphoserine. K523 is covalently cross-linked (Glycyl lysine isopeptide (Lys-Gly) (interchain with G-Cter in SUMO2)).

This sequence belongs to the DEAD box helicase family. DDX5/DBP2 subfamily. In terms of assembly, identified in the spliceosome C complex. Component of a ribonucleoprotein complex containing mRNAs and RNA-binding proteins including DDX5, HNRNPH2 and SRSF1 as well as splicing regulator ARVCF. Interacts with RBM4; the interaction occurs in an RNA-independent manner. Interacts with AGO1 and AGO2. Interacts with ESR1, AR, EP300, CREBBP, POLR2A, TP53, RUNX2 and HDAC1. Self-associates. Interacts with DDX17. Interacts with BRDT. The large PER complex involved in the repression of transcriptional termination is composed of at least PER2, CDK9, DDX5, DHX9, NCBP1 and POLR2A (active). Interacts with DHX36; this interaction occurs in a RNA-dependent manner. Interacts with NUPR1. Interacts with ERCC6. Interacts with DDX3X in the cytoplasm; this interaction may be more efficient when both proteins are unphosphorylated. Post-translationally, arg-502 is dimethylated, probably to asymmetric dimethylarginine. Sumoylated; sumoylation, promoted by PIAS1, promotes interaction with HDAC1 and transcriptional repression activity. Sumoylation also significantly increases stability, and reduces polyubiquitination. In terms of processing, polyubiquitinated, leading to proteasomal degradation. Post-translationally, weakly phosphorylated in the G1/S phase of the cell cycle and much more at G2/M, especially at Thr and Tyr residues.

The protein localises to the nucleus. Its subcellular location is the nucleolus. It is found in the nucleus speckle. The protein resides in the cytoplasm. It catalyses the reaction ATP + H2O = ADP + phosphate + H(+). In terms of biological role, involved in the alternative regulation of pre-mRNA splicing; its RNA helicase activity is necessary for increasing tau exon 10 inclusion and occurs in a RBM4-dependent manner. Binds to the tau pre-mRNA in the stem-loop region downstream of exon 10. The rate of ATP hydrolysis is highly stimulated by single-stranded RNA. Involved in transcriptional regulation; the function is independent of the RNA helicase activity. Transcriptional coactivator for androgen receptor AR but probably not ESR1. Synergizes with DDX17 and SRA1 RNA to activate MYOD1 transcriptional activity and involved in skeletal muscle differentiation. Transcriptional coactivator for p53/TP53 and involved in p53/TP53 transcriptional response to DNA damage and p53/TP53-dependent apoptosis. Transcriptional coactivator for RUNX2 and involved in regulation of osteoblast differentiation. Acts as a transcriptional repressor in a promoter-specific manner; the function probably involves association with histone deacetylases, such as HDAC1. As component of a large PER complex is involved in the inhibition of 3' transcriptional termination of circadian target genes such as PER1 and NR1D1 and the control of the circadian rhythms. This chain is Probable ATP-dependent RNA helicase DDX5 (DDX5), found in Homo sapiens (Human).